The primary structure comprises 103 residues: Large ribosomal subunit protein bL21 (103 aa).

It belongs to the bacterial ribosomal protein bL21 family. Part of the 50S ribosomal subunit. Contacts protein L20.

Functionally, this protein binds to 23S rRNA in the presence of protein L20. In Maridesulfovibrio salexigens (strain ATCC 14822 / DSM 2638 / NCIMB 8403 / VKM B-1763) (Desulfovibrio salexigens), this protein is Large ribosomal subunit protein bL21.